Consider the following 398-residue polypeptide: Na(+)/H(+) antiporter NhaA (398 aa).

A run of 12 helical transmembrane segments spans residues 21–41 (AGGI…NSPL), 56–76 (LSVS…LVGL), 94–114 (VLPG…YVFI), 124–144 (GWAI…SLLG), 153–173 (VFLT…IAIF), 176–196 (SGLS…LVVL), 201–221 (VMTL…VLKS), 263–283 (IVPF…SLAG), 284–304 (LSLG…LVVG), 306–326 (LVGV…DLPA), 333–353 (MIGI…IGLL), and 367–387 (VGIL…LLMA).

This sequence belongs to the NhaA Na(+)/H(+) (TC 2.A.33) antiporter family.

It localises to the cell inner membrane. It carries out the reaction Na(+)(in) + 2 H(+)(out) = Na(+)(out) + 2 H(+)(in). Its function is as follows. Na(+)/H(+) antiporter that extrudes sodium in exchange for external protons. The sequence is that of Na(+)/H(+) antiporter NhaA from Mesorhizobium japonicum (strain LMG 29417 / CECT 9101 / MAFF 303099) (Mesorhizobium loti (strain MAFF 303099)).